Consider the following 219-residue polypeptide: Rho-related protein racN (219 aa).

Position 12-19 (12-19 (GDVTIGKT)) interacts with GTP. The Effector region motif lies at 33 to 41 (YIPTIFDNH). GTP-binding positions include 58-62 (DTGGG) and 114-117 (TKTD). C216 bears the Cysteine methyl ester mark. A lipid anchor (S-geranylgeranyl cysteine) is attached at C216. A propeptide spans 217–219 (IIC) (removed in mature form).

It belongs to the small GTPase superfamily. Rho family.

The protein localises to the cell membrane. The protein is Rho-related protein racN (racN) of Dictyostelium discoideum (Social amoeba).